Here is a 187-residue protein sequence, read N- to C-terminus: UPF0232 protein JTY_0004 (187 aa).

Composition is skewed to basic and acidic residues over residues 1-17 (MTGS…ERSM) and 24-45 (LVRR…DAGR). Disordered stretches follow at residues 1-75 (MTGS…DPQP) and 168-187 (PSWR…DTYG).

Belongs to the UPF0232 family.

The chain is UPF0232 protein JTY_0004 from Mycobacterium bovis (strain BCG / Tokyo 172 / ATCC 35737 / TMC 1019).